The chain runs to 429 residues: Glutamate-1-semialdehyde 2,1-aminomutase (429 aa).

At K268 the chain carries N6-(pyridoxal phosphate)lysine.

It belongs to the class-III pyridoxal-phosphate-dependent aminotransferase family. HemL subfamily. In terms of assembly, homodimer. It depends on pyridoxal 5'-phosphate as a cofactor.

It is found in the cytoplasm. It catalyses the reaction (S)-4-amino-5-oxopentanoate = 5-aminolevulinate. Its pathway is porphyrin-containing compound metabolism; protoporphyrin-IX biosynthesis; 5-aminolevulinate from L-glutamyl-tRNA(Glu): step 2/2. The sequence is that of Glutamate-1-semialdehyde 2,1-aminomutase from Serratia proteamaculans (strain 568).